Here is a 232-residue protein sequence, read N- to C-terminus: Proteasome subunit alpha (232 aa).

This sequence belongs to the peptidase T1A family. In terms of assembly, the 20S proteasome core is composed of 14 alpha and 14 beta subunits that assemble into four stacked heptameric rings, resulting in a barrel-shaped structure. The two inner rings, each composed of seven catalytic beta subunits, are sandwiched by two outer rings, each composed of seven alpha subunits. The catalytic chamber with the active sites is on the inside of the barrel. Has a gated structure, the ends of the cylinder being occluded by the N-termini of the alpha-subunits. Is capped by the proteasome-associated ATPase, ARC.

Its subcellular location is the cytoplasm. It participates in protein degradation; proteasomal Pup-dependent pathway. Its activity is regulated as follows. The formation of the proteasomal ATPase ARC-20S proteasome complex, likely via the docking of the C-termini of ARC into the intersubunit pockets in the alpha-rings, may trigger opening of the gate for substrate entry. Interconversion between the open-gate and close-gate conformations leads to a dynamic regulation of the 20S proteasome proteolysis activity. In terms of biological role, component of the proteasome core, a large protease complex with broad specificity involved in protein degradation. The sequence is that of Proteasome subunit alpha from Acidimicrobium ferrooxidans (strain DSM 10331 / JCM 15462 / NBRC 103882 / ICP).